Reading from the N-terminus, the 461-residue chain is Putative cytochrome P450 132 (461 aa).

Position 409 (Cys409) interacts with heme.

Belongs to the cytochrome P450 family. Requires heme as cofactor.

The chain is Putative cytochrome P450 132 (cyp132) from Mycobacterium tuberculosis (strain ATCC 25618 / H37Rv).